Reading from the N-terminus, the 272-residue chain is Sulfate transporter CysZ (272 aa).

The next 4 helical transmembrane spans lie at 29 to 49 (FVII…WLFI), 66 to 86 (WLSF…LLLF), 148 to 168 (IIAL…VPVL), and 219 to 239 (FVPV…TLMW).

This sequence belongs to the CysZ family.

The protein localises to the cell inner membrane. Its function is as follows. High affinity, high specificity proton-dependent sulfate transporter, which mediates sulfate uptake. Provides the sulfur source for the cysteine synthesis pathway. In Haemophilus influenzae (strain 86-028NP), this protein is Sulfate transporter CysZ.